The following is a 161-amino-acid chain: Phosphopantetheine adenylyltransferase (161 aa).

Serine 8 is a binding site for substrate. Residues 8-9 (SF) and histidine 16 contribute to the ATP site. Lysine 40, threonine 72, and arginine 86 together coordinate substrate. ATP contacts are provided by residues 87–89 (GLR), glutamate 97, and 122–128 (HSFLSSS).

This sequence belongs to the bacterial CoaD family. Homohexamer. Mg(2+) is required as a cofactor.

It localises to the cytoplasm. It carries out the reaction (R)-4'-phosphopantetheine + ATP + H(+) = 3'-dephospho-CoA + diphosphate. Its pathway is cofactor biosynthesis; coenzyme A biosynthesis; CoA from (R)-pantothenate: step 4/5. Functionally, reversibly transfers an adenylyl group from ATP to 4'-phosphopantetheine, yielding dephospho-CoA (dPCoA) and pyrophosphate. The sequence is that of Phosphopantetheine adenylyltransferase from Prochlorococcus marinus (strain SARG / CCMP1375 / SS120).